A 284-amino-acid chain; its full sequence is Small ribosomal subunit protein uS5z (284 aa).

Residues M1–F19 show a composition bias toward basic and acidic residues. The tract at residues M1 to T51 is disordered. Positions G20 to G29 are enriched in gly residues. The S5 DRBM domain occupies L95–V158.

It belongs to the universal ribosomal protein uS5 family.

In Arabidopsis thaliana (Mouse-ear cress), this protein is Small ribosomal subunit protein uS5z (RPS2A).